The primary structure comprises 245 residues: Biosynthetic peptidoglycan transglycosylase (245 aa).

Residues 19–39 (IVYAGAVFAAAWLATQLFYFV) form a helical membrane-spanning segment.

It belongs to the glycosyltransferase 51 family.

Its subcellular location is the cell inner membrane. It carries out the reaction [GlcNAc-(1-&gt;4)-Mur2Ac(oyl-L-Ala-gamma-D-Glu-L-Lys-D-Ala-D-Ala)](n)-di-trans,octa-cis-undecaprenyl diphosphate + beta-D-GlcNAc-(1-&gt;4)-Mur2Ac(oyl-L-Ala-gamma-D-Glu-L-Lys-D-Ala-D-Ala)-di-trans,octa-cis-undecaprenyl diphosphate = [GlcNAc-(1-&gt;4)-Mur2Ac(oyl-L-Ala-gamma-D-Glu-L-Lys-D-Ala-D-Ala)](n+1)-di-trans,octa-cis-undecaprenyl diphosphate + di-trans,octa-cis-undecaprenyl diphosphate + H(+). The protein operates within cell wall biogenesis; peptidoglycan biosynthesis. Its function is as follows. Peptidoglycan polymerase that catalyzes glycan chain elongation from lipid-linked precursors. The protein is Biosynthetic peptidoglycan transglycosylase of Burkholderia multivorans (strain ATCC 17616 / 249).